We begin with the raw amino-acid sequence, 350 residues long: Phosphotriesterase-related protein (350 aa).

6 residues coordinate a divalent metal cation: His22, His24, Glu169, His201, His230, and Asp298.

This sequence belongs to the metallo-dependent hydrolases superfamily. Phosphotriesterase family. The cofactor is a divalent metal cation.

In Drosophila sechellia (Fruit fly), this protein is Phosphotriesterase-related protein.